The primary structure comprises 383 residues: Succinyl-diaminopimelate desuccinylase (383 aa).

Residue histidine 73 coordinates Zn(2+). Aspartate 75 is a catalytic residue. Aspartate 107 lines the Zn(2+) pocket. Glutamate 141 acts as the Proton acceptor in catalysis. Glutamate 142, glutamate 170, and histidine 356 together coordinate Zn(2+).

Belongs to the peptidase M20A family. DapE subfamily. In terms of assembly, homodimer. Zn(2+) is required as a cofactor. It depends on Co(2+) as a cofactor.

The catalysed reaction is N-succinyl-(2S,6S)-2,6-diaminopimelate + H2O = (2S,6S)-2,6-diaminopimelate + succinate. It participates in amino-acid biosynthesis; L-lysine biosynthesis via DAP pathway; LL-2,6-diaminopimelate from (S)-tetrahydrodipicolinate (succinylase route): step 3/3. Its function is as follows. Catalyzes the hydrolysis of N-succinyl-L,L-diaminopimelic acid (SDAP), forming succinate and LL-2,6-diaminopimelate (DAP), an intermediate involved in the bacterial biosynthesis of lysine and meso-diaminopimelic acid, an essential component of bacterial cell walls. This chain is Succinyl-diaminopimelate desuccinylase, found in Pseudomonas syringae pv. syringae (strain B728a).